The chain runs to 364 residues: D-alanine--D-alanine ligase (364 aa).

Residues 134–344 enclose the ATP-grasp domain; that stretch reads KVLLKSFNIP…YESLVDKLIT (211 aa). 167–222 lines the ATP pocket; that stretch reads NNKLNYPVIVKPSVLGSSIGINVAYNVSQIEKYIEEAFEYDLTVVVEKFIKAREIE. Mg(2+) is bound by residues D297, E311, and N313.

This sequence belongs to the D-alanine--D-alanine ligase family. Requires Mg(2+) as cofactor. Mn(2+) is required as a cofactor.

It localises to the cytoplasm. The catalysed reaction is 2 D-alanine + ATP = D-alanyl-D-alanine + ADP + phosphate + H(+). It functions in the pathway cell wall biogenesis; peptidoglycan biosynthesis. In terms of biological role, cell wall formation. This Borrelia recurrentis (strain A1) protein is D-alanine--D-alanine ligase.